The chain runs to 322 residues: Undecaprenyl-phosphate 4-deoxy-4-formamido-L-arabinose transferase (322 aa).

Over 1-235 (MFEIHPVKKV…TCLTTTPLRM (235 aa)) the chain is Cytoplasmic. The chain crosses the membrane as a helical span at residues 236–256 (LSLLGSIIAIGGFSIAVLLVI). Over 257–269 (LRLTFGPQWAAEG) the chain is Periplasmic. Residues 270-290 (VFMLFAVLFTFIGAQFIGMGL) form a helical membrane-spanning segment. Residues 291–322 (LGEYIGRIYTDVRARPRYFVQQVIRPSSKENE) lie on the Cytoplasmic side of the membrane.

Belongs to the glycosyltransferase 2 family.

Its subcellular location is the cell inner membrane. The catalysed reaction is UDP-4-deoxy-4-formamido-beta-L-arabinose + di-trans,octa-cis-undecaprenyl phosphate = 4-deoxy-4-formamido-alpha-L-arabinopyranosyl di-trans,octa-cis-undecaprenyl phosphate + UDP. Its pathway is glycolipid biosynthesis; 4-amino-4-deoxy-alpha-L-arabinose undecaprenyl phosphate biosynthesis; 4-amino-4-deoxy-alpha-L-arabinose undecaprenyl phosphate from UDP-4-deoxy-4-formamido-beta-L-arabinose and undecaprenyl phosphate: step 1/2. The protein operates within bacterial outer membrane biogenesis; lipopolysaccharide biosynthesis. In terms of biological role, catalyzes the transfer of 4-deoxy-4-formamido-L-arabinose from UDP to undecaprenyl phosphate. The modified arabinose is attached to lipid A and is required for resistance to polymyxin and cationic antimicrobial peptides. In Shigella sonnei (strain Ss046), this protein is Undecaprenyl-phosphate 4-deoxy-4-formamido-L-arabinose transferase.